The chain runs to 305 residues: Aspartate carbamoyltransferase catalytic subunit (305 aa).

Residues arginine 51 and threonine 52 each coordinate carbamoyl phosphate. Residue lysine 79 participates in L-aspartate binding. Residues arginine 101, histidine 129, and glutamine 132 each coordinate carbamoyl phosphate. Arginine 165 and arginine 220 together coordinate L-aspartate. Carbamoyl phosphate is bound by residues glycine 258 and proline 259.

The protein belongs to the aspartate/ornithine carbamoyltransferase superfamily. ATCase family. In terms of assembly, heterododecamer (2C3:3R2) of six catalytic PyrB chains organized as two trimers (C3), and six regulatory PyrI chains organized as three dimers (R2).

It catalyses the reaction carbamoyl phosphate + L-aspartate = N-carbamoyl-L-aspartate + phosphate + H(+). It participates in pyrimidine metabolism; UMP biosynthesis via de novo pathway; (S)-dihydroorotate from bicarbonate: step 2/3. Functionally, catalyzes the condensation of carbamoyl phosphate and aspartate to form carbamoyl aspartate and inorganic phosphate, the committed step in the de novo pyrimidine nucleotide biosynthesis pathway. This is Aspartate carbamoyltransferase catalytic subunit from Rubrobacter xylanophilus (strain DSM 9941 / JCM 11954 / NBRC 16129 / PRD-1).